Here is a 238-residue protein sequence, read N- to C-terminus: MAEPVYHRVVVKLSGEYFAGDQSFGIHQPTIDRIAGDLIAAQQLGVEIAVVIGGGNIFRGVEVSTRGVSRPTGDTMGMLATVMNCLALEAAIERRGVSARTLSAFVMPQVCELFTRATAHRYLAEKRIVLLGGGTGNPFFTTDTTAVLRAAEIGAQAVLKATNVDGVYSADPKKDPSAQRFERLTHSQALDGGYKVMDATAFALARDTLLPIIVFSIAEPGSVGAILSGTGRGTIVAG.

12–15 (KLSG) serves as a coordination point for ATP. Residue Gly-54 participates in UMP binding. ATP is bound by residues Gly-55 and Arg-59. Residues Asp-74 and 135–142 (TGNPFFTT) contribute to the UMP site. Thr-162, Asn-163, Tyr-168, and Asp-171 together coordinate ATP.

It belongs to the UMP kinase family. In terms of assembly, homohexamer.

It localises to the cytoplasm. The catalysed reaction is UMP + ATP = UDP + ADP. Its pathway is pyrimidine metabolism; CTP biosynthesis via de novo pathway; UDP from UMP (UMPK route): step 1/1. With respect to regulation, inhibited by UTP. Catalyzes the reversible phosphorylation of UMP to UDP. The chain is Uridylate kinase from Rhodopseudomonas palustris (strain BisA53).